The primary structure comprises 212 residues: Large ribosomal subunit protein uL3 (212 aa).

Over residues threonine 136 to proline 155 the composition is skewed to polar residues. A disordered region spans residues threonine 136–arginine 157. Glutamine 153 carries the post-translational modification N5-methylglutamine.

Belongs to the universal ribosomal protein uL3 family. In terms of assembly, part of the 50S ribosomal subunit. Forms a cluster with proteins L14 and L19. Methylated by PrmB.

One of the primary rRNA binding proteins, it binds directly near the 3'-end of the 23S rRNA, where it nucleates assembly of the 50S subunit. This is Large ribosomal subunit protein uL3 from Shewanella putrefaciens (strain CN-32 / ATCC BAA-453).